Consider the following 205-residue polypeptide: UPF0111 protein YkaA (205 aa).

Belongs to the UPF0111 family.

This chain is UPF0111 protein YkaA (ykaA), found in Bacillus subtilis (strain 168).